A 376-amino-acid polypeptide reads, in one-letter code: Succinyl-diaminopimelate desuccinylase (376 aa).

A Zn(2+)-binding site is contributed by histidine 66. The active site involves aspartate 68. Residue aspartate 99 coordinates Zn(2+). The active-site Proton acceptor is the glutamate 133. Residues glutamate 134, glutamate 162, and histidine 349 each coordinate Zn(2+).

It belongs to the peptidase M20A family. DapE subfamily. Homodimer. Zn(2+) serves as cofactor. The cofactor is Co(2+).

It carries out the reaction N-succinyl-(2S,6S)-2,6-diaminopimelate + H2O = (2S,6S)-2,6-diaminopimelate + succinate. The protein operates within amino-acid biosynthesis; L-lysine biosynthesis via DAP pathway; LL-2,6-diaminopimelate from (S)-tetrahydrodipicolinate (succinylase route): step 3/3. In terms of biological role, catalyzes the hydrolysis of N-succinyl-L,L-diaminopimelic acid (SDAP), forming succinate and LL-2,6-diaminopimelate (DAP), an intermediate involved in the bacterial biosynthesis of lysine and meso-diaminopimelic acid, an essential component of bacterial cell walls. This chain is Succinyl-diaminopimelate desuccinylase, found in Buchnera aphidicola subsp. Cinara cedri (strain Cc).